Consider the following 525-residue polypeptide: Bifunctional purine biosynthesis protein PurH (525 aa).

The MGS-like domain maps to 10–156 (HRIPIRRALV…KNHPSVAIVT (147 aa)).

Belongs to the PurH family.

The catalysed reaction is (6R)-10-formyltetrahydrofolate + 5-amino-1-(5-phospho-beta-D-ribosyl)imidazole-4-carboxamide = 5-formamido-1-(5-phospho-D-ribosyl)imidazole-4-carboxamide + (6S)-5,6,7,8-tetrahydrofolate. It catalyses the reaction IMP + H2O = 5-formamido-1-(5-phospho-D-ribosyl)imidazole-4-carboxamide. The protein operates within purine metabolism; IMP biosynthesis via de novo pathway; 5-formamido-1-(5-phospho-D-ribosyl)imidazole-4-carboxamide from 5-amino-1-(5-phospho-D-ribosyl)imidazole-4-carboxamide (10-formyl THF route): step 1/1. It participates in purine metabolism; IMP biosynthesis via de novo pathway; IMP from 5-formamido-1-(5-phospho-D-ribosyl)imidazole-4-carboxamide: step 1/1. This chain is Bifunctional purine biosynthesis protein PurH, found in Nocardioides sp. (strain ATCC BAA-499 / JS614).